Consider the following 80-residue polypeptide: ATP synthase F(1) complex subunit delta, mitochondrial (80 aa).

Residues 1–22 constitute a mitochondrion transit peptide; sequence MLPATLLRXSGLGRVVRQARAY.

The protein belongs to the ATPase epsilon chain family. As to quaternary structure, component of the ATP synthase complex composed at least of ATP5F1A/subunit alpha, ATP5F1B/subunit beta, ATP5MC1/subunit c (homooctomer), MT-ATP6/subunit a, MT-ATP8/subunit 8, ATP5ME/subunit e, ATP5MF/subunit f, ATP5MG/subunit g, ATP5MK/subunit k, ATP5MJ/subunit j, ATP5F1C/subunit gamma, ATP5F1D/subunit delta, ATP5F1E/subunit epsilon, ATP5PF/subunit F6, ATP5PB/subunit b, ATP5PD/subunit d, ATP5PO/subunit OSCP. ATP synthase complex consists of a soluble F(1) head domain (subunits alpha(3) and beta(3)) - the catalytic core - and a membrane F(0) domain - the membrane proton channel (subunits c, a, 8, e, f, g, k and j). These two domains are linked by a central stalk (subunits gamma, delta, and epsilon) rotating inside the F1 region and a stationary peripheral stalk (subunits F6, b, d, and OSCP). Component of a complex composed at least by ATPIF1, ATP5F1A, ATP5F1B, ATP5F1C AND ATP5F1E.

Its subcellular location is the mitochondrion. The protein resides in the mitochondrion inner membrane. Functionally, subunit delta, of the mitochondrial membrane ATP synthase complex (F(1)F(0) ATP synthase or Complex V) that produces ATP from ADP in the presence of a proton gradient across the membrane which is generated by electron transport complexes of the respiratory chain. ATP synthase complex consist of a soluble F(1) head domain - the catalytic core - and a membrane F(1) domain - the membrane proton channel. These two domains are linked by a central stalk rotating inside the F(1) region and a stationary peripheral stalk. During catalysis, ATP synthesis in the catalytic domain of F(1) is coupled via a rotary mechanism of the central stalk subunits to proton translocation. In vivo, can only synthesize ATP although its ATP hydrolase activity can be activated artificially in vitro. With the central stalk subunit gamma, is essential for the biogenesis of F(1) catalytic part of the ATP synthase complex namely in the formation of F1 assembly intermediate. In Sus scrofa (Pig), this protein is ATP synthase F(1) complex subunit delta, mitochondrial.